We begin with the raw amino-acid sequence, 441 residues long: Transducin-like enhancer protein 7 (441 aa).

2 disordered regions span residues 1-77 (MSGE…QWHL) and 91-119 (PDAQ…SSSS). The segment covering 27–49 (ESSGVSSQPEPQVQQQLGSLLGV) has biased composition (low complexity). Residues 62 to 76 (PADQETSTVTQQQWH) show a composition bias toward polar residues. The span at 108–119 (GSEVGQPYSSSS) shows a compositional bias: low complexity. 5 WD repeats span residues 156–194 (FHGK…AGEK), 204–243 (HPQD…QVRA), 247–285 (STGP…LIRK), 286–325 (HEVP…RLHQ), and 409–441 (EESS…QLLY).

It belongs to the WD repeat Groucho/TLE family.

In Homo sapiens (Human), this protein is Transducin-like enhancer protein 7.